Reading from the N-terminus, the 702-residue chain is Polyribonucleotide nucleotidyltransferase (702 aa).

Mg(2+) is bound by residues Asp-485 and Asp-491. Positions 552–611 constitute a KH domain; that stretch reads PKTSTLQIDPEKIRDVIGAGGKVINKIIADTGVKIDIKEDGLVYVSSAESEGVKEAVKII. In terms of domain architecture, S1 motif spans 621 to 689; it reads GEIYLGKVTK…SQGRINLSRK (69 aa).

It belongs to the polyribonucleotide nucleotidyltransferase family. It depends on Mg(2+) as a cofactor.

It is found in the cytoplasm. The enzyme catalyses RNA(n+1) + phosphate = RNA(n) + a ribonucleoside 5'-diphosphate. Its function is as follows. Involved in mRNA degradation. Catalyzes the phosphorolysis of single-stranded polyribonucleotides processively in the 3'- to 5'-direction. The protein is Polyribonucleotide nucleotidyltransferase of Clostridium perfringens (strain SM101 / Type A).